The sequence spans 89 residues: uncharacterized protein (89 aa).

Helical transmembrane passes span 1–21 and 28–48; these read MFLA…ISLI and GISL…TIAA.

Its subcellular location is the cell membrane. This is an uncharacterized protein from Methanocaldococcus jannaschii (strain ATCC 43067 / DSM 2661 / JAL-1 / JCM 10045 / NBRC 100440) (Methanococcus jannaschii).